A 57-amino-acid chain; its full sequence is Large ribosomal subunit protein bL32 (57 aa).

Residues 1-16 (MAVQKSRKTPSRRGMR) show a composition bias toward basic residues. Residues 1-37 (MAVQKSRKTPSRRGMRRSHDALSTTAITVDETTGELH) form a disordered region. Over residues 21-31 (ALSTTAITVDE) the composition is skewed to polar residues.

This sequence belongs to the bacterial ribosomal protein bL32 family.

The sequence is that of Large ribosomal subunit protein bL32 from Hydrogenovibrio crunogenus (strain DSM 25203 / XCL-2) (Thiomicrospira crunogena).